The chain runs to 115 residues: Large ribosomal subunit protein bL19 (115 aa).

It belongs to the bacterial ribosomal protein bL19 family.

In terms of biological role, this protein is located at the 30S-50S ribosomal subunit interface and may play a role in the structure and function of the aminoacyl-tRNA binding site. The protein is Large ribosomal subunit protein bL19 of Francisella tularensis subsp. mediasiatica (strain FSC147).